The sequence spans 124 residues: Ribonuclease pancreatic (124 aa).

The span at 1–13 shows a compositional bias: basic and acidic residues; the sequence is SETAAEKFERQHM. The tract at residues 1–23 is disordered; it reads SETAAEKFERQHMDSYSSSSSNS. The substrate site is built by Lys-7 and Arg-10. His-12 functions as the Proton acceptor in the catalytic mechanism. 4 cysteine pairs are disulfide-bonded: Cys-26–Cys-84, Cys-40–Cys-95, Cys-58–Cys-110, and Cys-65–Cys-72. Substrate-binding positions include 41–45, Lys-66, and Arg-85; that span reads KPVNT. Catalysis depends on His-119, which acts as the Proton donor.

This sequence belongs to the pancreatic ribonuclease family. In terms of assembly, monomer. Interacts with and forms tight 1:1 complexes with RNH1. Dimerization of two such complexes may occur. Interaction with RNH1 inhibits this protein. In terms of tissue distribution, pancreas.

It localises to the secreted. It catalyses the reaction an [RNA] containing cytidine + H2O = an [RNA]-3'-cytidine-3'-phosphate + a 5'-hydroxy-ribonucleotide-3'-[RNA].. The catalysed reaction is an [RNA] containing uridine + H2O = an [RNA]-3'-uridine-3'-phosphate + a 5'-hydroxy-ribonucleotide-3'-[RNA].. Functionally, endonuclease that catalyzes the cleavage of RNA on the 3' side of pyrimidine nucleotides. Acts on single-stranded and double-stranded RNA. This is Ribonuclease pancreatic (RNASE1) from Camelus dromedarius (Dromedary).